Reading from the N-terminus, the 743-residue chain is POU domain, class 2, transcription factor 1 (743 aa).

Residues 1 to 11 (MNNPSETSKPS) show a composition bias toward polar residues. Disordered stretches follow at residues 1-34 (MNNP…QPVP), 67-95 (SLNV…SVQA), 258-283 (ATPI…EEPS), and 357-381 (SSDS…RRRK). Low complexity predominate over residues 81–95 (SQQPSQPSQQPSVQA). A phosphothreonine mark is found at threonine 270 and threonine 276. A POU-specific domain is found at 280-354 (EEPSDLEELE…LLEKWLNDAE (75 aa)). Serine 283 is modified (phosphoserine). Residues 357-371 (SSDSSLSSPSALNSP) are compositionally biased toward low complexity. A DNA-binding region (homeobox) is located at residues 379–438 (RRKKRTSIETNIRVALEKSFLENQKPTSEEITMIADQLNMEKEVIRVWFCNRRQKEKRIN). A phosphoserine mark is found at serine 385 and serine 448. Positions 494–504 (VTGTSDTTSNN) are enriched in polar residues. The disordered stretch occupies residues 494–557 (VTGTSDTTSN…TTSTPLSSPL (64 aa)). Over residues 505-557 (TATVISTAPPASSAVTSPSLSPSPSASASTSEASSASETSTTQTTSTPLSSPL) the composition is skewed to low complexity.

Belongs to the POU transcription factor family. Class-2 subfamily. Interacts with POU2AF1; the interaction increases POU2F1 transactivation activity. Interacts with NR3C1, AR, PGR and HCFC1. As to quaternary structure, (Microbial infection) Associates with the herpes simplex virus VP16-induced complex; binding to HCFC1 activates the viral transcriptional activator VP16 for association with POU2F1, to form a multiprotein-DNA complex responsible for activating transcription of the viral immediate early genes. In terms of assembly, (Microbial infection) Interacts with human herpesvirus 8 (KSHV) protein RTA/ORF50; this interaction enhances RTA/ORF50-mediated transactivation of several viral promoters including K-bZIP promoter. Phosphorylated by PRKDC. As to expression, ubiquitous. Isoform 2 is lymphocyte-specific.

Its subcellular location is the nucleus. Its function is as follows. Transcription factor that binds to the octamer motif (5'-ATTTGCAT-3') and activates the promoters of the genes for some small nuclear RNAs (snRNA) and of genes such as those for histone H2B and immunoglobulins. Modulates transcription transactivation by NR3C1, AR and PGR. (Microbial infection) In case of human herpes simplex virus (HSV) infection, POU2F1 forms a multiprotein-DNA complex with the viral transactivator protein VP16 and HCFC1 thereby enabling the transcription of the viral immediate early genes. The protein is POU domain, class 2, transcription factor 1 (POU2F1) of Homo sapiens (Human).